A 386-amino-acid polypeptide reads, in one-letter code: Probable magnesium transporter NIPA5 (386 aa).

Topologically, residues 1–18 are extracellular; it reads MVYSSGSWRDAYKGMSSD. A helical membrane pass occupies residues 19 to 39; that stretch reads NVKGLVLALSSSIFIGASFIV. Residues 40-61 lie on the Cytoplasmic side of the membrane; it reads KKKGLKKAGASGLRAGSGGYSY. Transmembrane regions (helical) follow at residues 62-82 and 83-103; these read LLEP…IANF and AAYA…SIII. Over 104–115 the chain is Cytoplasmic; it reads SASLAHIILQEK. Residues 116–136 form a helical membrane-spanning segment; sequence LHTFGILGCALCIVGSVTIVL. Over 137–157 the chain is Extracellular; that stretch reads HAPQEQDIVSVLEVWNLATEP. A helical transmembrane segment spans residues 158–178; sequence AFLFYAAAVVGAAIVLIVQFI. Residues 179-189 lie on the Cytoplasmic side of the membrane; it reads PLYGQSHVMVY. The chain crosses the membrane as a helical span at residues 190–210; that stretch reads IGVCSLIGSLSVMSVKALGIA. Over 211–220 the chain is Extracellular; the sequence is LKLTFSGTNQ. A helical membrane pass occupies residues 221 to 241; it reads LGYPQTWVFTVIVLFCVITQM. Residues 242–255 are Cytoplasmic-facing; sequence NYLNKALDTFNTAV. The chain crosses the membrane as a helical span at residues 256 to 276; it reads VSPIYYVMFTSLTILASVIMF. The Extracellular segment spans residues 277-283; that stretch reads KDWDRQS. The helical transmembrane segment at 284–304 threads the bilayer; sequence GTQIMTELCGFVTILSGTFLL. Topologically, residues 305-386 are cytoplasmic; sequence HTTTDMVDGE…LRRQESSLRS (82 aa). The interval 352-386 is disordered; it reads RQESAKSPRPARQNKQLEDDLEAVPLRRQESSLRS. Residues 376-386 are compositionally biased toward basic and acidic residues; the sequence is PLRRQESSLRS.

The protein belongs to the NIPA (TC 2.A.7) family. Homodimer.

Its subcellular location is the cell membrane. It is found in the early endosome. Acts as a Mg(2+) transporter. Can also transport other divalent cations such as Fe(2+), Sr(2+), Ba(2+), Mn(2+) and Co(2+) but to a much less extent than Mg(2+). The sequence is that of Probable magnesium transporter NIPA5 from Arabidopsis thaliana (Mouse-ear cress).